The chain runs to 36 residues: Protein YibY (36 aa).

This Escherichia coli (strain K12) protein is Protein YibY.